The primary structure comprises 404 residues: Intracellular hyaluronan-binding protein 4.L (404 aa).

Disordered stretches follow at residues 1–21 (MRLDTMKETPSSPVNTEMQDN), 51–288 (LTRR…QEMS), and 359–379 (LTRPSRGRGGGGRGRVRREEA). Residues 8 to 19 (ETPSSPVNTEMQ) show a composition bias toward polar residues. Composition is skewed to basic and acidic residues over residues 71-81 (GKKESQKDRKA), 145-159 (KVDRAERRPAFREVR), and 165-184 (RSNEYSIEKPMEILDQDKQM). Positions 188 to 200 (GGRGGMRGRGRGG) are enriched in gly residues. Composition is skewed to basic and acidic residues over residues 205-233 (TENDNLRGKREFDRHSGSDRAIRPEDKRG) and 270-281 (EEHAKVPEEKNE).

The protein belongs to the SERBP1-HABP4 family. In terms of assembly, associates with ribosomes; promoting ribosome stabilization. Interacts with eef2/eEF2; promoting ribosome stabilization.

The protein resides in the nucleus. It is found in the cytoplasm. It localises to the stress granule. The protein localises to the nucleolus. Its subcellular location is the nucleus speckle. The protein resides in the cajal body. In terms of biological role, ribosome-binding protein that promotes ribosome hibernation, a process during which ribosomes are stabilized in an inactive state and preserved from proteasomal degradation. Acts via its association with eef2/eEF2 factor at the A-site of the ribosome, promoting ribosome stabilization in an inactive state compatible with storage. Plays a key role in ribosome hibernation in the mature egg by promoting ribosome stabilization. Ribosomes, which are produced in large quantities during oogenesis, are stored and translationally repressed in the egg and early embryo. The chain is Intracellular hyaluronan-binding protein 4.L from Xenopus laevis (African clawed frog).